A 336-amino-acid chain; its full sequence is Aspartate--ammonia ligase (336 aa).

Belongs to the class-II aminoacyl-tRNA synthetase family. AsnA subfamily.

Its subcellular location is the cytoplasm. It carries out the reaction L-aspartate + NH4(+) + ATP = L-asparagine + AMP + diphosphate + H(+). Its pathway is amino-acid biosynthesis; L-asparagine biosynthesis; L-asparagine from L-aspartate (ammonia route): step 1/1. The polypeptide is Aspartate--ammonia ligase (Limosilactobacillus fermentum (strain NBRC 3956 / LMG 18251) (Lactobacillus fermentum)).